Consider the following 690-residue polypeptide: Long-chain fatty acid transport protein 5 (690 aa).

The Cytoplasmic portion of the chain corresponds to M1 to A30. The next 2 membrane-spanning stretches (helical) occupy residues L31 to L51 and L56 to L76. Over P77 to L690 the chain is Cytoplasmic. An AMP-binding site is contributed by F292–K303. S501 is modified (phosphoserine).

Belongs to the ATP-dependent AMP-binding enzyme family. Predominantly expressed in liver.

The protein resides in the endoplasmic reticulum membrane. It is found in the microsome. It localises to the cell membrane. It catalyses the reaction a fatty acid(in) = a fatty acid(out). The catalysed reaction is cholate + ATP + CoA = choloyl-CoA + AMP + diphosphate. It carries out the reaction chenodeoxycholate + ATP + CoA = chenodeoxycholoyl-CoA + AMP + diphosphate. The enzyme catalyses deoxycholate + ATP + CoA = deoxycholoyl-CoA + AMP + diphosphate. It catalyses the reaction lithocholate + ATP + CoA = lithocholoyl-CoA + AMP + diphosphate. The catalysed reaction is (25R)-3alpha,7alpha,12alpha-trihydroxy-5beta-cholestan-26-oate + ATP + CoA = (25R)-3alpha,7alpha,12alpha-trihydroxy-5beta-cholestan-26-oyl-CoA + AMP + diphosphate. It carries out the reaction a very long-chain fatty acid + ATP + CoA = a very long-chain fatty acyl-CoA + AMP + diphosphate. The enzyme catalyses tetracosanoate + ATP + CoA = tetracosanoyl-CoA + AMP + diphosphate. It catalyses the reaction hexacosanoate + ATP + CoA = hexacosanoyl-CoA + AMP + diphosphate. The catalysed reaction is a long-chain fatty acid + ATP + CoA = a long-chain fatty acyl-CoA + AMP + diphosphate. It carries out the reaction octadecanoate + ATP + CoA = octadecanoyl-CoA + AMP + diphosphate. The enzyme catalyses eicosanoate + ATP + CoA = eicosanoyl-CoA + AMP + diphosphate. Its activity is regulated as follows. 3-alpha,7-alpha,12-alpha-trihydroxy-5-beta-cholestanate (THCA) inhibits the activation of cholate. Its function is as follows. May mediate the import of long-chain fatty acids (LCFA) by facilitating their transport across cell membranes. Also catalyzes the ATP-dependent formation of fatty acyl-CoA using LCFA and very-long-chain fatty acids (VLCFA) as substrates. Mainly functions as a bile acyl-CoA synthetase catalyzing the activation of bile acids via ATP-dependent formation of bile acid CoA thioesters which is necessary for their subsequent conjugation with glycine or taurine. Both primary bile acids (cholic acid and chenodeoxycholic acid) and secondary bile acids (deoxycholic acid and lithocholic acid) are the principal substrates. In vitro, activates 3-alpha,7-alpha,12-alpha-trihydroxy-5-beta-cholestanate ((25R)-3alpha,7alpha,12alpha-trihydroxy-5beta-cholestan-26-oate or THCA), the C27 precursor of cholic acid deriving from the de novo synthesis from cholesterol. Plays an important role in hepatic fatty acid uptake and bile acid reconjugation and recycling but not in de novo synthesis of bile acids. In Homo sapiens (Human), this protein is Long-chain fatty acid transport protein 5 (SLC27A5).